The following is a 579-amino-acid chain: DELLA protein GAIP (579 aa).

The tract at residues 1–25 is disordered; it reads MKREHHYLHPRPEPPSVATGSNRES. The short motif at 46 to 50 is the DELLA motif element; the sequence is DELLA. Positions 202–570 constitute a GRAS domain; the sequence is VDSQENGIQL…RPLIATSAWK (369 aa). The tract at residues 209–263 is leucine repeat I (LRI); it reads IQLVHALMVCAEAVQQNNLNLAEALVKRIDYLAVSQAGAMRKVATFFAEALARRI. The segment at 281–346 is VHIID; the sequence is QMHFYESCPY…SGPPTFRLTG (66 aa). The VHIID motif lies at 312–316; it reads VHVID. Residues 360–392 are leucine repeat II (LRII); that stretch reads DVGWKLVKFAETLHVEFEYRGFVANSLADLDAS. A PFYRE region spans residues 404-491; sequence VVVNSVFELH…EMYLGKQICN (88 aa). Residues 412–416 carry the LXXLL motif motif; that stretch reads LHQLL. Positions 494 to 570 are SAW; it reads ACEGADRVER…RPLIATSAWK (77 aa).

The protein belongs to the GRAS family. DELLA subfamily. Post-translationally, phosphorylated. Ubiquitinated. Upon GA application it is ubiquitinated, leading to its subsequent degradation.

It is found in the nucleus. In terms of biological role, probable transcriptional regulator that acts as a repressor of the gibberellin (GA) signaling pathway. Probably acts by participating in large multiprotein complexes that represses transcription of GA-inducible genes. Upon GA application, it is degraded by the proteasome, allowing the GA signaling pathway. In Cucurbita maxima (Pumpkin), this protein is DELLA protein GAIP (GAIP).